Reading from the N-terminus, the 570-residue chain is Periplasmic trehalase (570 aa).

A signal peptide spans Met1–Ala34. Substrate is bound by residues Arg159, Trp166 to Asp167, Asn203, Arg212 to Gln214, Arg284 to Glu286, and Gly317. Active-site proton donor/acceptor residues include Asp319 and Glu503. Glu518 provides a ligand contact to substrate. Residues Pro545–Gln570 form a disordered region. Low complexity predominate over residues Pro554–Gln570.

The protein belongs to the glycosyl hydrolase 37 family. As to quaternary structure, monomer.

It is found in the periplasm. The catalysed reaction is alpha,alpha-trehalose + H2O = alpha-D-glucose + beta-D-glucose. In terms of biological role, provides the cells with the ability to utilize trehalose at high osmolarity by splitting it into glucose molecules that can subsequently be taken up by the phosphotransferase-mediated uptake system. The sequence is that of Periplasmic trehalase from Salmonella agona (strain SL483).